The sequence spans 131 residues: Protein FON2 SPARE1 (131 aa).

The N-terminal stretch at 1–22 (MSRRLGAAAAVLLLWLAVLTFA) is a signal peptide. The segment at 67–131 (SPSSLTTTDR…VPTGPNPLHH (65 aa)) is disordered. A compositionally biased stretch (basic residues) spans 76-97 (RHHHHHRHHGHHHHRGHDRWNR).

Belongs to the CLV3/ESR signal peptide family. Expressed in all aerial apical meristems, including the floral and inflorescence meristems in the reproductive phase and the shoot apical meristem in the vegetative phase. Also detected in the primordia of lateral organs such as the leaf and the floral organs.

It is found in the secreted. Its function is as follows. Involved in the maintenance of the floral meristem and of the shoot apical meristem in the vegetative phase. Suppresses the fon2 mutation and acts independently of FON1. In Oryza sativa subsp. japonica, the protein has a single amino acid substitution at the putative processing site of the signal peptide and is inactive. This is Protein FON2 SPARE1 (FOS1) from Oryza sativa subsp. indica (Rice).